A 730-amino-acid polypeptide reads, in one-letter code: Replication restart protein PriA (730 aa).

The region spanning 212–378 (LLFHSGFNVW…QNGKYQHLVL (167 aa)) is the Helicase ATP-binding domain. 225 to 232 (GVTGSGKT) contributes to the ATP binding site. Residues 321 to 324 (DEEH) carry the DEAH box motif. The Zn(2+) site is built by C437, C440, C446, C449, C464, C467, C477, and C480. Residues 472 to 640 (TIPRQCGDCG…LPPFTFQALI (169 aa)) form the Helicase C-terminal domain.

The protein belongs to the helicase family. PriA subfamily. Component of the replication restart primosome. Requires Zn(2+) as cofactor.

It catalyses the reaction Couples ATP hydrolysis with the unwinding of duplex DNA by translocating in the 3'-5' direction.. It carries out the reaction ATP + H2O = ADP + phosphate + H(+). Functionally, initiates the restart of stalled replication forks, which reloads the replicative helicase on sites other than the origin of replication. Recognizes and binds to abandoned replication forks and remodels them to uncover a helicase loading site. Promotes assembly of the primosome at these replication forks. In Haemophilus influenzae (strain ATCC 51907 / DSM 11121 / KW20 / Rd), this protein is Replication restart protein PriA.